The sequence spans 103 residues: Small ribosomal subunit protein uS10 (103 aa).

The protein belongs to the universal ribosomal protein uS10 family. Part of the 30S ribosomal subunit.

In terms of biological role, involved in the binding of tRNA to the ribosomes. This Neisseria gonorrhoeae (strain NCCP11945) protein is Small ribosomal subunit protein uS10.